A 70-amino-acid polypeptide reads, in one-letter code: UPF0352 protein Sden_2336 (70 aa).

Belongs to the UPF0352 family.

The chain is UPF0352 protein Sden_2336 from Shewanella denitrificans (strain OS217 / ATCC BAA-1090 / DSM 15013).